A 192-amino-acid chain; its full sequence is Erythropoietin (192 aa).

An N-terminal signal peptide occupies residues 1 to 26; sequence MGVRECPALLLLLSLLLPPLGLPALG. 2 disulfide bridges follow: Cys-33–Cys-187 and Cys-55–Cys-59. N-linked (GlcNAc...) asparagine glycosylation is present at Asn-50. N-linked (GlcNAc...) asparagine glycans are attached at residues Asn-64 and Asn-109.

Belongs to the EPO/TPO family.

The protein resides in the secreted. Functionally, hormone involved in the regulation of erythrocyte proliferation and differentiation and the maintenance of a physiological level of circulating erythrocyte mass. Binds to EPOR leading to EPOR dimerization and JAK2 activation thereby activating specific downstream effectors, including STAT1 and STAT3. This is Erythropoietin (EPO) from Equus caballus (Horse).